A 340-amino-acid chain; its full sequence is Central glycolytic genes regulator (340 aa).

The H-T-H motif DNA-binding region spans Arg37–Gln56. Residues Gly149 to Thr152, Arg175, Gln185, Arg250 to Arg251, Glu269, and Lys310 each bind beta-D-fructose 1,6-bisphosphate.

Belongs to the SorC transcriptional regulatory family. In terms of assembly, homotetramer. Binds primarily as a dimer to each half-site of the full-length operator, with much higher affinity for the right site. Then, both dimers interact, bridging the two-half sites of the operator region.

With respect to regulation, stability and function are regulated by the effector molecule fructose-1,6-bisphosphate (FBP). In the presence of glucose, binding of FBP to the low-affinity sugar-binding site of CggR disrupts dimer/dimer bridging interactions and triggers a tetramer to dimer transition, which leaves two physically independent dimers on the target DNA and allows transcription of the downstream coding sequences by the RNA polymerase. In addition, FBP and several other phosphorylated compounds can bind to a high-affinity binding-site and protect CggR against aggregation and proteolysis. In terms of biological role, in the absence of glucose, represses the transcription of the gapA operon, which encodes five key glycolytic enzymes. Binds specifically to the cggR-gapA promoter region and blocks the progression of the RNA polymerase, leading to the arrest of the transcription. The protein is Central glycolytic genes regulator (cggR) of Bacillus subtilis (strain 168).